The sequence spans 287 residues: Phosphatidylserine decarboxylase proenzyme (287 aa).

Catalysis depends on charge relay system; for autoendoproteolytic cleavage activity residues Asp90, His147, and Ser253. The active-site Schiff-base intermediate with substrate; via pyruvic acid; for decarboxylase activity is the Ser253. Ser253 carries the post-translational modification Pyruvic acid (Ser); by autocatalysis.

The protein belongs to the phosphatidylserine decarboxylase family. PSD-B subfamily. Prokaryotic type I sub-subfamily. In terms of assembly, heterodimer of a large membrane-associated beta subunit and a small pyruvoyl-containing alpha subunit. Requires pyruvate as cofactor. Is synthesized initially as an inactive proenzyme. Formation of the active enzyme involves a self-maturation process in which the active site pyruvoyl group is generated from an internal serine residue via an autocatalytic post-translational modification. Two non-identical subunits are generated from the proenzyme in this reaction, and the pyruvate is formed at the N-terminus of the alpha chain, which is derived from the carboxyl end of the proenzyme. The autoendoproteolytic cleavage occurs by a canonical serine protease mechanism, in which the side chain hydroxyl group of the serine supplies its oxygen atom to form the C-terminus of the beta chain, while the remainder of the serine residue undergoes an oxidative deamination to produce ammonia and the pyruvoyl prosthetic group on the alpha chain. During this reaction, the Ser that is part of the protease active site of the proenzyme becomes the pyruvoyl prosthetic group, which constitutes an essential element of the active site of the mature decarboxylase.

It is found in the cell membrane. It carries out the reaction a 1,2-diacyl-sn-glycero-3-phospho-L-serine + H(+) = a 1,2-diacyl-sn-glycero-3-phosphoethanolamine + CO2. It functions in the pathway phospholipid metabolism; phosphatidylethanolamine biosynthesis; phosphatidylethanolamine from CDP-diacylglycerol: step 2/2. Its function is as follows. Catalyzes the formation of phosphatidylethanolamine (PtdEtn) from phosphatidylserine (PtdSer). In Aliivibrio salmonicida (strain LFI1238) (Vibrio salmonicida (strain LFI1238)), this protein is Phosphatidylserine decarboxylase proenzyme.